The chain runs to 208 residues: dTTP/UTP pyrophosphatase (208 aa).

The Proton acceptor role is filled by Asp78.

The protein belongs to the Maf family. YhdE subfamily. The cofactor is a divalent metal cation.

The protein localises to the cytoplasm. The catalysed reaction is dTTP + H2O = dTMP + diphosphate + H(+). The enzyme catalyses UTP + H2O = UMP + diphosphate + H(+). In terms of biological role, nucleoside triphosphate pyrophosphatase that hydrolyzes dTTP and UTP. May have a dual role in cell division arrest and in preventing the incorporation of modified nucleotides into cellular nucleic acids. The sequence is that of dTTP/UTP pyrophosphatase from Maricaulis maris (strain MCS10) (Caulobacter maris).